A 431-amino-acid chain; its full sequence is Reticulon-like protein B17 (431 aa).

2 disordered regions span residues 1-110 (MEST…SEAV) and 126-152 (PPRK…SSSD). The span at 12–26 (TKSASRLQDSSNPPN) shows a compositional bias: polar residues. Over residues 126–138 (PPRKRKTNGRPKK) the composition is skewed to basic residues. Positions 142-152 (SSAPPLCSSSD) are enriched in polar residues. Positions 168–355 (ISDLVMWRDV…VTAFWNLTSI (188 aa)) constitute a Reticulon domain. 4 helical membrane passes run 177 to 197 (VAKS…SCFA), 202 to 222 (FSVF…SFLS), 286 to 306 (YGHL…SFTI), and 349 to 369 (FWNL…LVIF). Acidic residues predominate over residues 382–415 (EVEPVENEQEEETLPQEEETVPQEEETVPQEEEQ). The segment at 382 to 422 (EVEPVENEQEEETLPQEEETVPQEEETVPQEEEQTQPSEER) is disordered.

It is found in the endoplasmic reticulum membrane. The protein is Reticulon-like protein B17 (RTNLB17) of Arabidopsis thaliana (Mouse-ear cress).